A 200-amino-acid polypeptide reads, in one-letter code: Oligoribonuclease (200 aa).

An Exonuclease domain is found at 5–169 (MVWIDCEMTG…ADIRESIAEL (165 aa)). Y126 is an active-site residue.

Belongs to the oligoribonuclease family.

The protein resides in the cytoplasm. In terms of biological role, 3'-to-5' exoribonuclease specific for small oligoribonucleotides. This Streptomyces coelicolor (strain ATCC BAA-471 / A3(2) / M145) protein is Oligoribonuclease.